The following is an 89-amino-acid chain: Small ribosomal subunit protein uS15 (89 aa).

Belongs to the universal ribosomal protein uS15 family. As to quaternary structure, part of the 30S ribosomal subunit. Forms a bridge to the 50S subunit in the 70S ribosome, contacting the 23S rRNA.

Functionally, one of the primary rRNA binding proteins, it binds directly to 16S rRNA where it helps nucleate assembly of the platform of the 30S subunit by binding and bridging several RNA helices of the 16S rRNA. Its function is as follows. Forms an intersubunit bridge (bridge B4) with the 23S rRNA of the 50S subunit in the ribosome. In Mycobacterium marinum (strain ATCC BAA-535 / M), this protein is Small ribosomal subunit protein uS15.